The following is a 316-amino-acid chain: L-lactate dehydrogenase 3 (316 aa).

NAD(+) contacts are provided by V16, D37, R42, and Y68. R91 contributes to the substrate binding site. Residues S104, 121–123 (ASN), and T146 each bind NAD(+). 123–126 (NPVD) lines the substrate pocket. Position 151 to 154 (151 to 154 (DSSR)) interacts with substrate. R156 and H171 together coordinate beta-D-fructose 1,6-bisphosphate. The active-site Proton acceptor is the H178. Position 233 (T233) interacts with substrate.

This sequence belongs to the LDH/MDH superfamily. LDH family. As to quaternary structure, homotetramer.

It is found in the cytoplasm. The enzyme catalyses (S)-lactate + NAD(+) = pyruvate + NADH + H(+). It functions in the pathway fermentation; pyruvate fermentation to lactate; (S)-lactate from pyruvate: step 1/1. With respect to regulation, allosterically activated by fructose 1,6-bisphosphate (FBP). Its function is as follows. Catalyzes the conversion of lactate to pyruvate. The protein is L-lactate dehydrogenase 3 of Bacillus cereus (strain ATCC 14579 / DSM 31 / CCUG 7414 / JCM 2152 / NBRC 15305 / NCIMB 9373 / NCTC 2599 / NRRL B-3711).